We begin with the raw amino-acid sequence, 661 residues long: 1-deoxy-D-xylulose-5-phosphate synthase (661 aa).

Thiamine diphosphate is bound by residues His98 and 139–141 (AHS). Asp170 lines the Mg(2+) pocket. Thiamine diphosphate is bound by residues 171-172 (GA), Asn199, Tyr309, and Glu391. Asn199 contacts Mg(2+).

This sequence belongs to the transketolase family. DXPS subfamily. In terms of assembly, homodimer. The cofactor is Mg(2+). Requires thiamine diphosphate as cofactor.

It carries out the reaction D-glyceraldehyde 3-phosphate + pyruvate + H(+) = 1-deoxy-D-xylulose 5-phosphate + CO2. Its pathway is metabolic intermediate biosynthesis; 1-deoxy-D-xylulose 5-phosphate biosynthesis; 1-deoxy-D-xylulose 5-phosphate from D-glyceraldehyde 3-phosphate and pyruvate: step 1/1. In terms of biological role, catalyzes the acyloin condensation reaction between C atoms 2 and 3 of pyruvate and glyceraldehyde 3-phosphate to yield 1-deoxy-D-xylulose-5-phosphate (DXP). This Bradyrhizobium diazoefficiens (strain JCM 10833 / BCRC 13528 / IAM 13628 / NBRC 14792 / USDA 110) protein is 1-deoxy-D-xylulose-5-phosphate synthase.